Consider the following 323-residue polypeptide: MTTGKGKILILGATGYLGKYMVKASISLGHPTYAYVMPLKKNSDDSKLQLLKEFESLGVTIFYGELSEHDKLVAVFKEVDIVISTLAVPQYLEQLKVIEAIKEAGNIKRFVPSEFGNEVDRVRALPRFQAVLDNKKKIRRATEAAGIPFTFVSANSLTAYFVDYLLHPRQKSEQVTIYGSGDAKAVLNYEEDVAAYTIKAADDPRAANRVLIIKPPKNIVSQLDLVSSWEKTTGSTLKMTHISEQEIIKLSESINFPENIHASILHNIFIAGAQLSFELTQDHDLEASELYPNYNYTSVDEYLKICLVNPPKPKLATYAQPST.

NADP(+) is bound by residues 14–17 (TGYL), 36–47 (VMPLKKNSDDSK), 88–90 (VPQ), 113–115 (SEF), Lys-135, and 155–157 (NSL). Lys-135 functions as the Proton donor/acceptor in the catalytic mechanism.

This sequence belongs to the NmrA-type oxidoreductase family. As to expression, expressed in flowers, especially in corolla and tubes of petals, probably in both epidermal and mesophyll cell layers.

It carries out the reaction (E)-isoeugenol + acetate + NADP(+) = (E)-coniferyl acetate + NADPH. Its pathway is aromatic compound metabolism; phenylpropanoid biosynthesis. With respect to regulation, inhibited by zinc and copper ions. Repressed by 4-bromo-cinnamyl acetate. Involved in the biosynthesis of the floral volatile isoeugenol. Catalyzes the synthesis of the phenylpropene isoeugenol from coniferyl acetate. Phenylpropenes are the primary constituents of various essential plant oils. They are produced as antimicrobial and antianimal compounds, or as floral attractants of pollinators. Isoeugenol is a characteristic aromatic constituent of spices and a floral volatile compound. The protein is Isoeugenol synthase 1 of Petunia hybrida (Petunia).